The chain runs to 280 residues: UPF0276 protein NMB2142 (280 aa).

The protein belongs to the UPF0276 family.

The chain is UPF0276 protein NMB2142 from Neisseria meningitidis serogroup B (strain ATCC BAA-335 / MC58).